The primary structure comprises 335 residues: MASTIADNADNNGNSKDSVQYLRKVLTSESSPLAQRFRALFSLKHLASSKPPTEETLPAIEAIAAAFSSPSALLKHELAYCLGQTRNLDTVPHLRKVLEDTQEDAMCRHEAAEALGALGDAGSLAILQRLRDDESEEEVVRETCDIAVDRILWETSKDSKSEKLKQSDFTSIDPAPPLPLSSAEQSIPELKQILLDASLPLFKRYRAMFALRDMCSPPDLPTAVPAIEALAEGFKDRSALFRHEIAFVFGQLSHPASIPSLVATLSDKNEVGMVRHEAAEALGSLGAEDGVEETLKRFVNDPETVVRDSIIVALDMAEYEKSGEQEYILEQPVAA.

HEAT-like PBS-type repeat units lie at residues 74-100 (LKHELAYCLGQTRNLDTVPHLRKVLED), 107-133 (CRHEAAEALGALGDAGSLAILQRLRDD), 203-233 (KRYRAMFALRDMCSPPDLPTAVPAIEALAEG), 241-267 (FRHEIAFVFGQLSHPASIPSLVATLSD), and 274-301 (VRHEAAEALGSLGAEDGVEETLKRFVND). His76, Glu77, His109, and Glu110 together coordinate Fe cation. Residues His243, Glu244, His276, and Glu277 each contribute to the Fe cation site.

This sequence belongs to the deoxyhypusine hydroxylase family. Fe(2+) is required as a cofactor.

The protein localises to the cytoplasm. The protein resides in the nucleus. It carries out the reaction [eIF5A protein]-deoxyhypusine + AH2 + O2 = [eIF5A protein]-hypusine + A + H2O. It functions in the pathway protein modification; eIF5A hypusination. Functionally, catalyzes the hydroxylation of the N(6)-(4-aminobutyl)-L-lysine intermediate to form hypusine, an essential post-translational modification only found in mature eIF-5A factor. The polypeptide is Deoxyhypusine hydroxylase (Coccidioides immitis (strain RS) (Valley fever fungus)).